The sequence spans 272 residues: UPF0759 protein YecE (272 aa).

Belongs to the UPF0759 family.

This chain is UPF0759 protein YecE (yecE), found in Escherichia coli O157:H7.